Consider the following 93-residue polypeptide: Small ribosomal subunit protein uS19 (93 aa).

It belongs to the universal ribosomal protein uS19 family.

Functionally, protein S19 forms a complex with S13 that binds strongly to the 16S ribosomal RNA. This is Small ribosomal subunit protein uS19 from Clostridium perfringens (strain ATCC 13124 / DSM 756 / JCM 1290 / NCIMB 6125 / NCTC 8237 / Type A).